Reading from the N-terminus, the 459-residue chain is Mycothione reductase (459 aa).

E31–C39 contributes to the FAD binding site. C39 and C44 are disulfide-bonded. Residue H444 is the Proton acceptor of the active site.

The protein belongs to the class-I pyridine nucleotide-disulfide oxidoreductase family. As to quaternary structure, homodimer. The cofactor is FAD.

The enzyme catalyses 2 mycothiol + NADP(+) = mycothione + NADPH + H(+). It catalyses the reaction 2 mycothiol + NAD(+) = mycothione + NADH + H(+). In terms of biological role, catalyzes the NAD(P)H-dependent reduction of mycothione (the oxidized disulfide form of mycothiol) to mycothiol. In Mycobacterium tuberculosis (strain CDC 1551 / Oshkosh), this protein is Mycothione reductase (mtr).